Reading from the N-terminus, the 400-residue chain is Renin (400 aa).

The first 23 residues, 1 to 23 (MDAWRGMPRWGLLLLLWGSCTFG), serve as a signal peptide directing secretion. A propeptide spans 24 to 60 (LPTETTTFKRISLKRMPSIRESLKERGVDMARLGPER) (activation peptide). N-linked (GlcNAc...) asparagine glycosylation is present at N65. One can recognise a Peptidase A1 domain in the interval 80–397 (YYGEIGIGTP…DRGNNRIGFA (318 aa)). Residue D98 is part of the active site. Residues C111 and C118 are joined by a disulfide bond. N135 is a glycosylation site (N-linked (GlcNAc...) asparagine). C277 and C281 are disulfide-bonded. The active site involves D286. The cysteines at positions 319 and 356 are disulfide-linked.

Belongs to the peptidase A1 family. As to quaternary structure, interacts with ATP6AP2.

The protein resides in the secreted. Its subcellular location is the membrane. The catalysed reaction is Cleavage of Leu-|-Xaa bond in angiotensinogen to generate angiotensin I.. Interaction with ATP6AP2 results in a 5-fold increased efficiency in angiotensinogen processing. Its function is as follows. Renin is a highly specific endopeptidase, whose only known function is to generate angiotensin I from angiotensinogen in the plasma, initiating a cascade of reactions that produce an elevation of blood pressure and increased sodium retention by the kidney. The sequence is that of Renin (REN) from Callithrix jacchus (White-tufted-ear marmoset).